The primary structure comprises 139 residues: Large ribosomal subunit protein uL16 (139 aa).

The tract at residues M1 to R23 is disordered. A compositionally biased stretch (basic residues) spans T7–R16.

The protein belongs to the universal ribosomal protein uL16 family. Part of the 50S ribosomal subunit.

Binds 23S rRNA and is also seen to make contacts with the A and possibly P site tRNAs. The sequence is that of Large ribosomal subunit protein uL16 from Myxococcus xanthus (strain DK1622).